The chain runs to 152 residues: Nucleoside diphosphate kinase (152 aa).

Residues Lys11, Phe59, Arg87, Thr93, Arg104, and Asn114 each contribute to the ATP site. His117 serves as the catalytic Pros-phosphohistidine intermediate.

It belongs to the NDK family. Homotetramer. Requires Mg(2+) as cofactor.

The protein resides in the cytoplasm. It carries out the reaction a 2'-deoxyribonucleoside 5'-diphosphate + ATP = a 2'-deoxyribonucleoside 5'-triphosphate + ADP. It catalyses the reaction a ribonucleoside 5'-diphosphate + ATP = a ribonucleoside 5'-triphosphate + ADP. Its function is as follows. Major role in the synthesis of nucleoside triphosphates other than ATP. The ATP gamma phosphate is transferred to the NDP beta phosphate via a ping-pong mechanism, using a phosphorylated active-site intermediate. This Prochlorococcus marinus (strain MIT 9313) protein is Nucleoside diphosphate kinase.